The sequence spans 312 residues: Malate dehydrogenase (312 aa).

NAD(+)-binding positions include 7–13 and Asp34; that span reads GAAGGIG. Residues Arg81 and Arg87 each coordinate substrate. Residues Asn94 and 117 to 119 contribute to the NAD(+) site; that span reads ITN. Asn119 and Arg153 together coordinate substrate. Catalysis depends on His177, which acts as the Proton acceptor. Met227 lines the NAD(+) pocket.

It belongs to the LDH/MDH superfamily. MDH type 1 family. Homodimer.

It carries out the reaction (S)-malate + NAD(+) = oxaloacetate + NADH + H(+). Catalyzes the reversible oxidation of malate to oxaloacetate. The polypeptide is Malate dehydrogenase (Escherichia coli (strain 55989 / EAEC)).